The following is a 348-amino-acid chain: MNGTEGPNFYVPFSNITGVVRSPFEQPQYYLAEPWQFSMLAAYMFLLIVLGFPINFLTLYVTVQHKKLRTPLNYILLNLAVADLFMVFGGFTTTLYTSLHGYFVFGPTGCNLEGFFATLGGEIGLWSLVVLAIERYVVVCKPMSNFRFGENHAIMGVAFTWVMALACAAPPLVGWSRYIPEGMQCSCGIDYYTLKPEVNNESFVIYMFVVHFTIPMIVIFFCYGQLVFTVKEAAAQQQESATTQKAEKEVTRMVIIMVIFFLICWLPYASVAMYIFTHQGSNFGPIFMTLPAFFAKTASIYNPIIYIMMNKQFRNCMLTSLCCGKNPLGDDEASATASKTETSQVAPA.

N-acetylmethionine is present on Met1. The Extracellular portion of the chain corresponds to 1–36; the sequence is MNGTEGPNFYVPFSNITGVVRSPFEQPQYYLAEPWQ. Asn2 and Asn15 each carry an N-linked (GlcNAc...) asparagine glycan. The helical transmembrane segment at 37 to 61 threads the bilayer; sequence FSMLAAYMFLLIVLGFPINFLTLYV. Residues 62-73 are Cytoplasmic-facing; that stretch reads TVQHKKLRTPLN. A helical transmembrane segment spans residues 74-96; that stretch reads YILLNLAVADLFMVFGGFTTTLY. The Extracellular portion of the chain corresponds to 97-110; the sequence is TSLHGYFVFGPTGC. Cys110 and Cys187 form a disulfide bridge. Residues 111 to 133 form a helical membrane-spanning segment; sequence NLEGFFATLGGEIGLWSLVVLAI. Residues 134-136 carry the 'Ionic lock' involved in activated form stabilization motif; sequence ERY. Residues 134–152 are Cytoplasmic-facing; that stretch reads ERYVVVCKPMSNFRFGENH. The helical transmembrane segment at 153–173 threads the bilayer; that stretch reads AIMGVAFTWVMALACAAPPLV. Over 174–202 the chain is Extracellular; the sequence is GWSRYIPEGMQCSCGIDYYTLKPEVNNES. Glu201 contacts Zn(2+). Residues 203-224 traverse the membrane as a helical segment; it reads FVIYMFVVHFTIPMIVIFFCYG. The Cytoplasmic portion of the chain corresponds to 225–252; it reads QLVFTVKEAAAQQQESATTQKAEKEVTR. The helical transmembrane segment at 253 to 274 threads the bilayer; it reads MVIIMVIFFLICWLPYASVAMY. Residues 275–286 are Extracellular-facing; it reads IFTHQGSNFGPI. Gln279 contributes to the Zn(2+) binding site. Residues 287–308 traverse the membrane as a helical segment; sequence FMTLPAFFAKTASIYNPIIYIM. N6-(retinylidene)lysine is present on Lys296. Residues 309–348 lie on the Cytoplasmic side of the membrane; the sequence is MNKQFRNCMLTSLCCGKNPLGDDEASATASKTETSQVAPA. Residues Cys322 and Cys323 are each lipidated (S-palmitoyl cysteine). The interval 330 to 348 is interaction with SAG; sequence DDEASATASKTETSQVAPA. A Phosphoserine modification is found at Ser334. Thr336 is modified (phosphothreonine). Phosphoserine is present on Ser338. Phosphothreonine is present on residues Thr340 and Thr342. A Phosphoserine modification is found at Ser343.

The protein belongs to the G-protein coupled receptor 1 family. Opsin subfamily. Homodimer. May form a complex composed of RHO, GRK1 and RCVRN in a Ca(2+)-dependent manner; RCVRN prevents the interaction between GRK1 and RHO. Interacts with GRK1. Interacts (phosphorylated form) with SAG. Interacts with GNAT1. Interacts with GNAT3. SAG and G-proteins compete for a common binding site. Interacts with PRCD; the interaction promotes PRCD stability. Forms a complex with ASAP1 and ARF4. Forms a complex with ASAP1, RAB11A, Rabin8/RAB3IP, ARF4 and RAB11FIP3; the complex regulates Golgi-to-cilia rhodopsin/RHO transport in photoreceptors. Post-translationally, phosphorylated on some or all of the serine and threonine residues present in the C-terminal region. Contains one covalently linked retinal chromophore. Upon light absorption, the covalently bound 11-cis-retinal is converted to all-trans-retinal. After hydrolysis of the Schiff base and release of the covalently bound all-trans-retinal, active rhodopsin is regenerated by binding of a fresh molecule of 11-cis-retinal.

Its subcellular location is the membrane. It localises to the cell projection. It is found in the cilium. The protein localises to the photoreceptor outer segment. Photoreceptor required for image-forming vision at low light intensity. Required for photoreceptor cell viability after birth. Light-induced isomerization of 11-cis to all-trans retinal triggers a conformational change that activates signaling via G-proteins. Subsequent receptor phosphorylation mediates displacement of the bound G-protein alpha subunit by the arrestin SAG and terminates signaling. This is Rhodopsin (Rho) from Rattus norvegicus (Rat).